The following is a 538-amino-acid chain: MMNLIEFPWLTAIIALPLVAALAIPIIPDKEGKTVRWYGLGVAFADFALMIAAFWHYYDFQSSSYQFVEKYAWVPQIGLNWSVAVDGLSMPLLLLTGLINTLAIFAAWKVTNKPRLFYGLMLVMYSAQLGVFVAQDLLLFFLMWEIELVPVYLLISIWGGPKRRYAATKFILYTAAASIFILVAGFALAFSGDTVTFDIAALGMKEYPKAIELLAYAGFLIAFGVKLPIFPLHTWLPDAHGEASAPGSMILAGVLLKMGGYALIRFNMEMLPDAHVYFAPVLAILGVVNIVYGACCAFAQTNLKRRLAYSSIAHMGFVLIGLASYTEIGVSGAVLQMVSHGLVAASLFFLTGVTYERTHTLLMDKMGGIGKIMPKTFALYTAGAMASLALPGMSGFVGELMVFIGIATSDVYSSSFKVVVVLLSAVGVILTPIYLLSMLRQVFYGKQSDELHLDAFVPDVKPRELFITASLLLPIIGIGLYPKLITQTYDAKTVEIAAHARQVLPVVAGQQPSSLYSQIFTAPTLANAQVESLVNISK.

The next 13 helical transmembrane spans lie at 7–27 (FPWL…IPII), 37–57 (WYGL…FWHY), 88–108 (LSMP…FAAW), 116–136 (LFYG…VAQD), 137–157 (LLLF…LISI), 170–190 (FILY…ALAF), 210–230 (AIEL…LPIF), 244–264 (SAPG…YALI), 278–298 (FAPV…CCAF), 315–335 (MGFV…GAVL), 336–356 (QMVS…VTYE), 388–408 (LALP…GIAT), and 418–438 (VVVV…LLSM).

The protein belongs to the complex I subunit 4 family.

It is found in the cellular thylakoid membrane. It catalyses the reaction a plastoquinone + NADH + (n+1) H(+)(in) = a plastoquinol + NAD(+) + n H(+)(out). The catalysed reaction is a plastoquinone + NADPH + (n+1) H(+)(in) = a plastoquinol + NADP(+) + n H(+)(out). Functionally, NDH-1 shuttles electrons from NAD(P)H, via FMN and iron-sulfur (Fe-S) centers, to quinones in the respiratory chain. The immediate electron acceptor for the enzyme in this species is believed to be plastoquinone. Couples the redox reaction to proton translocation (for every two electrons transferred, four hydrogen ions are translocated across the cytoplasmic membrane), and thus conserves the redox energy in a proton gradient. This Nostoc sp. (strain PCC 7120 / SAG 25.82 / UTEX 2576) protein is NAD(P)H-quinone oxidoreductase chain 4 1.